A 494-amino-acid polypeptide reads, in one-letter code: DBIRD complex subunit ZNF326 (494 aa).

3 disordered regions span residues 1-22 (MDREYGSYNQRSVNSYGNQSFS), 147-170 (AFGGRSNDAFGGPSKGRGRGRGQM), and 202-264 (KMAP…NSEK). Over residues 7–22 (SYNQRSVNSYGNQSFS) the composition is skewed to polar residues. Positions 200-221 (KRKMAPPFKPVGFFGKKQKLSK) match the Bipartite nuclear localization signal motif. C2H2 AKAP95-type zinc fingers lie at residues 273–295 (CSFCKFRSFDEKGIEEHLTSATH) and 365–388 (CSACSVYVPALHSSVQLHLKSADH). The tract at residues 429–494 (PFETQPDEQQ…CDPLTTTDEV (66 aa)) is disordered. A compositionally biased stretch (acidic residues) spans 433-451 (QPDEQQQEQEEEEEEEEQQ).

This sequence belongs to the AKAP95 family. Component of the DBIRD complex.

The protein localises to the nucleus. Core component of the DBIRD complex, a multiprotein complex that acts at the interface between core mRNP particles and RNA polymerase II (RNAPII) and integrates transcript elongation with the regulation of alternative splicing. This Xenopus laevis (African clawed frog) protein is DBIRD complex subunit ZNF326 (znf326).